Reading from the N-terminus, the 909-residue chain is Translation initiation factor IF-2 (909 aa).

A disordered region spans residues 49–314; it reads LNREQGGSAG…GKQRKTSTLQ (266 aa). Composition is skewed to basic and acidic residues over residues 99–177, 186–236, and 255–270; these read DAVE…EHKQ, IQSE…KWSS, and RAAEDENDAKVEGDRR. Over residues 271–285 the composition is skewed to basic residues; that stretch reads ARGRSGKATRQKKNN. The segment covering 286 to 299 has biased composition (basic and acidic residues); sequence KHSESKADREEARA. Residues 408–577 enclose the tr-type G domain; that stretch reads PRAPVVTIMG…LLQAEVLELK (170 aa). The interval 417-424 is G1; that stretch reads GHVDHGKT. 417-424 is a GTP binding site; sequence GHVDHGKT. The G2 stretch occupies residues 442 to 446; it reads GITQH. The segment at 463–466 is G3; sequence DTPG. Residues 463–467 and 517–520 contribute to the GTP site; these read DTPGH and NKID. Residues 517 to 520 are G4; sequence NKID. The segment at 553–555 is G5; it reads SAK.

The protein belongs to the TRAFAC class translation factor GTPase superfamily. Classic translation factor GTPase family. IF-2 subfamily.

The protein resides in the cytoplasm. Its function is as follows. One of the essential components for the initiation of protein synthesis. Protects formylmethionyl-tRNA from spontaneous hydrolysis and promotes its binding to the 30S ribosomal subunits. Also involved in the hydrolysis of GTP during the formation of the 70S ribosomal complex. This is Translation initiation factor IF-2 from Photorhabdus laumondii subsp. laumondii (strain DSM 15139 / CIP 105565 / TT01) (Photorhabdus luminescens subsp. laumondii).